Reading from the N-terminus, the 60-residue chain is Large ribosomal subunit protein bL32 (60 aa).

Residues Met1 to Pro44 are disordered. Positions Ser11–Leu22 are enriched in basic and acidic residues.

The protein belongs to the bacterial ribosomal protein bL32 family.

This Pseudomonas fluorescens (strain SBW25) protein is Large ribosomal subunit protein bL32.